The primary structure comprises 421 residues: Imidazolonepropionase (421 aa).

His81 and His83 together coordinate Fe(3+). Zn(2+) contacts are provided by His81 and His83. 4-imidazolone-5-propanoate-binding residues include Arg90, Tyr153, and His186. Tyr153 contacts N-formimidoyl-L-glutamate. A Fe(3+)-binding site is contributed by His251. Zn(2+) is bound at residue His251. Residue Glu254 participates in 4-imidazolone-5-propanoate binding. Position 326 (Asp326) interacts with Fe(3+). Asp326 lines the Zn(2+) pocket. Residues Asn328 and Gly330 each coordinate N-formimidoyl-L-glutamate. Ser331 serves as a coordination point for 4-imidazolone-5-propanoate.

It belongs to the metallo-dependent hydrolases superfamily. HutI family. Zn(2+) is required as a cofactor. It depends on Fe(3+) as a cofactor.

Its subcellular location is the cytoplasm. The catalysed reaction is 4-imidazolone-5-propanoate + H2O = N-formimidoyl-L-glutamate. It functions in the pathway amino-acid degradation; L-histidine degradation into L-glutamate; N-formimidoyl-L-glutamate from L-histidine: step 3/3. In terms of biological role, catalyzes the hydrolytic cleavage of the carbon-nitrogen bond in imidazolone-5-propanoate to yield N-formimidoyl-L-glutamate. It is the third step in the universal histidine degradation pathway. This is Imidazolonepropionase from Streptococcus pyogenes serotype M18 (strain MGAS8232).